A 685-amino-acid chain; its full sequence is MTSSTDSVPVITFADSPFRLHQPFPPAGDQPAAIELLTEGIGDGLMYQTLLGVTGSGKTYTMANVIARCGRPALVLAPNKTLAAQLYAEFREFFPENAVEYFVSYYDYYQPEAYVPSRDLFIEKDSSINEHIEQMRLSATKSLMERRDVVIVATVSCIYGIGDPVDYHAMILHLREGERIAHRDLVQRLVAMQYTRSDIDFRRGTFRVRGDVIDVFPAENAELAVRIEMFDDEVEHLTLFDPLTGHLKQKLVRFTVYPSSHYVTPRATVLKAIEAIKDELRDRSAWFQTSGKLVEAQRIEQRTRFDLEMLNEMGFCKGIENYSRHLSGRGQGEPPPTLIDYLPSDALLFVDESHVSIPQVGGMYKGDRSRKENLVGYGFRLPSALDNRPLKFEEFERLMPQTIFVSATPSTYEAEHQGQVVEQVVRPTGLIDPAIDVRPATTQVDDLLSEAKRRIAVGERVLVTTLTKRMAEDLTDYLAENGIRVRYLHSDIDTVERVEIIRDLRLGKFDVLVGINLLREGLDIPEVSLVAILDADKEGFLRSERSLIQTIGRAARHINGRAILYADVVTRSMRAAIDETERRRVKQIAFNQANGIVPKTVSKRIKDIIDGVYGGDVERDGRSVAEPPPEYFSMNEKTVAKSIRKLEKEMQEHARNLEFEKAAAARDELFRLRQRTFGADQHGTP.

The Helicase ATP-binding domain occupies 39-420 (EGIGDGLMYQ…TYEAEHQGQV (382 aa)). 52 to 59 (GVTGSGKT) contributes to the ATP binding site. Residues 105–128 (YYDYYQPEAYVPSRDLFIEKDSSI) carry the Beta-hairpin motif. One can recognise a Helicase C-terminal domain in the interval 443–596 (QVDDLLSEAK…QIAFNQANGI (154 aa)). In terms of domain architecture, UVR spans 640-675 (AKSIRKLEKEMQEHARNLEFEKAAAARDELFRLRQR).

This sequence belongs to the UvrB family. In terms of assembly, forms a heterotetramer with UvrA during the search for lesions. Interacts with UvrC in an incision complex.

The protein resides in the cytoplasm. Its function is as follows. The UvrABC repair system catalyzes the recognition and processing of DNA lesions. A damage recognition complex composed of 2 UvrA and 2 UvrB subunits scans DNA for abnormalities. Upon binding of the UvrA(2)B(2) complex to a putative damaged site, the DNA wraps around one UvrB monomer. DNA wrap is dependent on ATP binding by UvrB and probably causes local melting of the DNA helix, facilitating insertion of UvrB beta-hairpin between the DNA strands. Then UvrB probes one DNA strand for the presence of a lesion. If a lesion is found the UvrA subunits dissociate and the UvrB-DNA preincision complex is formed. This complex is subsequently bound by UvrC and the second UvrB is released. If no lesion is found, the DNA wraps around the other UvrB subunit that will check the other stand for damage. The protein is UvrABC system protein B of Aromatoleum aromaticum (strain DSM 19018 / LMG 30748 / EbN1) (Azoarcus sp. (strain EbN1)).